The primary structure comprises 172 residues: Shikimate kinase (172 aa).

ATP is bound at residue 14–19 (GAGKTT). Thr18 contacts Mg(2+). Asp36, Arg60, and Gly82 together coordinate substrate. Arg119 is a binding site for ATP. Arg137 is a binding site for substrate.

It belongs to the shikimate kinase family. As to quaternary structure, monomer. The cofactor is Mg(2+).

It localises to the cytoplasm. The catalysed reaction is shikimate + ATP = 3-phosphoshikimate + ADP + H(+). The protein operates within metabolic intermediate biosynthesis; chorismate biosynthesis; chorismate from D-erythrose 4-phosphate and phosphoenolpyruvate: step 5/7. Functionally, catalyzes the specific phosphorylation of the 3-hydroxyl group of shikimic acid using ATP as a cosubstrate. The chain is Shikimate kinase from Thermobifida fusca (strain YX).